The chain runs to 460 residues: MTDVQCEPALAGRKPKWADADIAELVDERTGRLDPRIYTDEALYEQELERIFGRSWLLMGHETQIPKAGDFMTNYMGEDPVMVVRQKNGEIRVFLNQCRHRGMRICRADGGNAKSFTCSYHGWAYDTGGNLVSVPFEEQAFPGLRKEDWGPLQARVETYKGLIFANWDADAPDLDTYLGEAKFYMDHMLDRTEAGTEAIPGIQKWVIPCNWKFAAEQFCSDMYHAGTTSHLSGILAGLPDGVDLSELAPPTEGIQYRATWGGHGSGFYIGDPNLLLAIMGPKVTEYWTQGPAAEKASERLGSTERGQQLMAQHMTIFPTCSFLPGINTIRAWHPRGPNEIEVWAFTVVDADAPEEMKEEYRQQTLRTFSAGGVFEQDDGENWVEIQQVLRGHKARSRPFNAEMGLGQTDSDNPDYPGTISYVYSEEAARGLYTQWVRMMTSPDWAALDATRPAVSESTHT.

Positions 56–165 constitute a Rieske domain; the sequence is WLLMGHETQI…VETYKGLIFA (110 aa). The [2Fe-2S] cluster site is built by Cys98, His100, Cys118, and His121. 217–230 lines the substrate pocket; that stretch reads QFCSDMYHAGTTSH. Residues His224, His230, and Asp378 each coordinate Fe cation.

The protein belongs to the bacterial ring-hydroxylating dioxygenase alpha subunit family. In terms of assembly, heterohexamer consisting of three BphA1 subunits and three BphA2 subunits. The multicomponent biphenyl dioxygenase system is composed of a ferredoxin reductase (BphA4), a ferredoxin (BphA3), and a terminal oxygenase (BphA1A2). [2Fe-2S] cluster serves as cofactor. Requires Fe cation as cofactor.

It carries out the reaction biphenyl + NADH + O2 + H(+) = (2R,3S)-3-phenylcyclohexa-3,5-diene-1,2-diol + NAD(+). Its pathway is xenobiotic degradation; biphenyl degradation; 2-hydroxy-2,4-pentadienoate and benzoate from biphenyl: step 1/4. Its function is as follows. Part of the oxygenase component of the biphenyl dioxygenase system that catalyzes the stereospecific dihydroxylation of the aromatic ring of biphenyl, yielding a dihydrodiol compound. Is essential for biphenyl degradation and growth of Rhodococcus sp. strain RHA1 on biphenyl as the sole source of carbon and energy. Can also use naphtalene and 4-chlorobiphenyl (4-CB) as substrates, as well as some polychlorinated biphenyls (PCB) such as 2,2'-dichlorobiphenyl, 2,3-dichlorobiphenyl and 2,5,2'-trichlorobiphenyl. Exhibits weak activity toward dibenzofuran and dibenzo-p-dioxin. Electrons are transferred from NADH to the [2Fe-2S] cluster in BphA1 via FAD of BphA4 and [2Fe-2S] cluster of BphA3. In Rhodococcus jostii (strain RHA1), this protein is Biphenyl 2,3-dioxygenase subunit alpha.